The chain runs to 473 residues: Photosystem II CP43 reaction center protein (473 aa).

Residues 1–14 constitute a propeptide that is removed on maturation; the sequence is MKILYSLRRFYHVE. At Thr-15 the chain carries N-acetylthreonine. Position 15 is a phosphothreonine (Thr-15). The next 5 membrane-spanning stretches (helical) occupy residues 69–93, 134–155, 178–200, 255–275, and 291–312; these read LFEVAHFVPEKPMYEQGLILLPHLA, LLGPETLEESFPFFGYVWKDRN, KALYFGGVYDTWAPGGGDVRKIT, KPFAWARRAFVWSGEAYLSYS, and WFNNTAYPSEFYGPTGPEASQA. Glu-367 serves as a coordination point for [CaMn4O5] cluster. The helical transmembrane segment at 447 to 471 threads the bilayer; that stretch reads RARAAAAGFEKGIDRDLEPVLYMNP.

This sequence belongs to the PsbB/PsbC family. PsbC subfamily. In terms of assembly, PSII is composed of 1 copy each of membrane proteins PsbA, PsbB, PsbC, PsbD, PsbE, PsbF, PsbH, PsbI, PsbJ, PsbK, PsbL, PsbM, PsbT, PsbX, PsbY, PsbZ, Psb30/Ycf12, at least 3 peripheral proteins of the oxygen-evolving complex and a large number of cofactors. It forms dimeric complexes. Binds multiple chlorophylls and provides some of the ligands for the Ca-4Mn-5O cluster of the oxygen-evolving complex. It may also provide a ligand for a Cl- that is required for oxygen evolution. PSII binds additional chlorophylls, carotenoids and specific lipids. is required as a cofactor.

It localises to the plastid. Its subcellular location is the chloroplast thylakoid membrane. Its function is as follows. One of the components of the core complex of photosystem II (PSII). It binds chlorophyll and helps catalyze the primary light-induced photochemical processes of PSII. PSII is a light-driven water:plastoquinone oxidoreductase, using light energy to abstract electrons from H(2)O, generating O(2) and a proton gradient subsequently used for ATP formation. This Brachypodium distachyon (Purple false brome) protein is Photosystem II CP43 reaction center protein.